The sequence spans 197 residues: Phosphoheptose isomerase (197 aa).

In terms of domain architecture, SIS spans 41–197; sequence VVETFRRGGK…EIVERTLFEE (157 aa). Substrate is bound at residue 56-58; sequence NGG. The Zn(2+) site is built by histidine 65 and glutamate 69. Residues glutamate 69, 98–99, 124–126, serine 129, and glutamine 176 each bind substrate; these read ND and STS. Zn(2+)-binding residues include glutamine 176 and histidine 184.

It belongs to the SIS family. GmhA subfamily. Zn(2+) serves as cofactor.

It localises to the cytoplasm. It catalyses the reaction 2 D-sedoheptulose 7-phosphate = D-glycero-alpha-D-manno-heptose 7-phosphate + D-glycero-beta-D-manno-heptose 7-phosphate. Its pathway is carbohydrate biosynthesis; D-glycero-D-manno-heptose 7-phosphate biosynthesis; D-glycero-alpha-D-manno-heptose 7-phosphate and D-glycero-beta-D-manno-heptose 7-phosphate from sedoheptulose 7-phosphate: step 1/1. Catalyzes the isomerization of sedoheptulose 7-phosphate in D-glycero-D-manno-heptose 7-phosphate. The chain is Phosphoheptose isomerase from Roseiflexus sp. (strain RS-1).